A 332-amino-acid polypeptide reads, in one-letter code: NADH-quinone oxidoreductase subunit H (332 aa).

9 helical membrane passes run 4-24 (FAFF…IFAS), 44-64 (IGPD…MIKL), 78-98 (FIFA…LAAI), 120-140 (VALL…FLGG), 165-185 (VGAL…LVDI), 194-214 (FSWL…ALFI), 255-275 (IAGA…FWII), 279-299 (IMMI…RAAF), and 312-332 (YLIL…TVLL).

The protein belongs to the complex I subunit 1 family. As to quaternary structure, NDH-1 is composed of 14 different subunits. Subunits NuoA, H, J, K, L, M, N constitute the membrane sector of the complex.

Its subcellular location is the cell inner membrane. It carries out the reaction a quinone + NADH + 5 H(+)(in) = a quinol + NAD(+) + 4 H(+)(out). NDH-1 shuttles electrons from NADH, via FMN and iron-sulfur (Fe-S) centers, to quinones in the respiratory chain. The immediate electron acceptor for the enzyme in this species is believed to be ubiquinone. Couples the redox reaction to proton translocation (for every two electrons transferred, four hydrogen ions are translocated across the cytoplasmic membrane), and thus conserves the redox energy in a proton gradient. This subunit may bind ubiquinone. In Campylobacter jejuni subsp. jejuni serotype O:23/36 (strain 81-176), this protein is NADH-quinone oxidoreductase subunit H.